Consider the following 369-residue polypeptide: Anhydro-N-acetylmuramic acid kinase (369 aa).

Residue 12-19 (GTSLDGVD) participates in ATP binding.

It belongs to the anhydro-N-acetylmuramic acid kinase family.

It carries out the reaction 1,6-anhydro-N-acetyl-beta-muramate + ATP + H2O = N-acetyl-D-muramate 6-phosphate + ADP + H(+). It functions in the pathway amino-sugar metabolism; 1,6-anhydro-N-acetylmuramate degradation. The protein operates within cell wall biogenesis; peptidoglycan recycling. In terms of biological role, catalyzes the specific phosphorylation of 1,6-anhydro-N-acetylmuramic acid (anhMurNAc) with the simultaneous cleavage of the 1,6-anhydro ring, generating MurNAc-6-P. Is required for the utilization of anhMurNAc either imported from the medium or derived from its own cell wall murein, and thus plays a role in cell wall recycling. This Shigella boydii serotype 18 (strain CDC 3083-94 / BS512) protein is Anhydro-N-acetylmuramic acid kinase.